The following is a 74-amino-acid chain: Translation initiation factor IF-1 (74 aa).

The S1-like domain maps to 1–72 (MAKETEMEFE…TRGRITYRKI (72 aa)).

Belongs to the IF-1 family. Component of the 30S ribosomal translation pre-initiation complex which assembles on the 30S ribosome in the order IF-2 and IF-3, IF-1 and N-formylmethionyl-tRNA(fMet); mRNA recruitment can occur at any time during PIC assembly.

It is found in the cytoplasm. One of the essential components for the initiation of protein synthesis. Stabilizes the binding of IF-2 and IF-3 on the 30S subunit to which N-formylmethionyl-tRNA(fMet) subsequently binds. Helps modulate mRNA selection, yielding the 30S pre-initiation complex (PIC). Upon addition of the 50S ribosomal subunit IF-1, IF-2 and IF-3 are released leaving the mature 70S translation initiation complex. The polypeptide is Translation initiation factor IF-1 (Mycoplasma capricolum subsp. capricolum (strain California kid / ATCC 27343 / NCTC 10154)).